The sequence spans 152 residues: uncharacterized protein (152 aa).

It belongs to the antirestriction protein family.

This is an uncharacterized protein from Escherichia coli (strain K12).